We begin with the raw amino-acid sequence, 230 residues long: NAD(P)H-hydrate epimerase (230 aa).

Residues 11 to 218 (AIAVDQELFN…ALQRKYELNL (208 aa)) form the YjeF N-terminal domain. 61 to 65 (NNGGD) contributes to the (6S)-NADPHX binding site. Asn-62 and Asp-126 together coordinate K(+). Residues 130–136 (GFSFKPP) and Asp-159 contribute to the (6S)-NADPHX site. Ser-162 contacts K(+).

The protein belongs to the NnrE/AIBP family. It depends on K(+) as a cofactor.

It carries out the reaction (6R)-NADHX = (6S)-NADHX. The catalysed reaction is (6R)-NADPHX = (6S)-NADPHX. Its function is as follows. Catalyzes the epimerization of the S- and R-forms of NAD(P)HX, a damaged form of NAD(P)H that is a result of enzymatic or heat-dependent hydration. This is a prerequisite for the S-specific NAD(P)H-hydrate dehydratase to allow the repair of both epimers of NAD(P)HX. The polypeptide is NAD(P)H-hydrate epimerase (Drosophila sechellia (Fruit fly)).